The chain runs to 302 residues: MDQQRLTHLKQLEAESIHIIREVAAEFDNPVMMYSIGKDSSVMLHLTRKAFYPGKIPFPLLHVDTDWKFRDMITFRDTTAKKYGFDLIVHKNPEGLAAGINPFDHGSSKHTDIMKTQGLKQALNKYGFDAAFGGARRDEEKSRAKERVYSFRDKNHTWDPKNQRPELWRTYNGQINKGESIRVFPLSNWTELDIWQYIYLENIEIVPLYLADVRPVVQRDGMLIMVDDDRMKLREGEQIEHKSVRFRTLGCYPLTGAIESQANTLTEIIEEMLVATSSERQGRAIDHDQSGSMELKKRQGYF.

The tract at residues Arg280–Phe302 is disordered.

It belongs to the PAPS reductase family. CysD subfamily. In terms of assembly, heterodimer composed of CysD, the smaller subunit, and CysN.

It catalyses the reaction sulfate + ATP + H(+) = adenosine 5'-phosphosulfate + diphosphate. It participates in sulfur metabolism; hydrogen sulfide biosynthesis; sulfite from sulfate: step 1/3. With CysN forms the ATP sulfurylase (ATPS) that catalyzes the adenylation of sulfate producing adenosine 5'-phosphosulfate (APS) and diphosphate, the first enzymatic step in sulfur assimilation pathway. APS synthesis involves the formation of a high-energy phosphoric-sulfuric acid anhydride bond driven by GTP hydrolysis by CysN coupled to ATP hydrolysis by CysD. The polypeptide is Sulfate adenylyltransferase subunit 2 (Vibrio cholerae serotype O1 (strain ATCC 39315 / El Tor Inaba N16961)).